The chain runs to 382 residues: V-type proton ATPase subunit C 1 (382 aa).

N-acetylthreonine is present on Thr2.

The protein belongs to the V-ATPase C subunit family. As to quaternary structure, V-ATPase is a heteromultimeric enzyme made up of two complexes: the ATP-hydrolytic V1 complex and the proton translocation V0 complex. The V1 complex consists of three catalytic AB heterodimers that form a heterohexamer, three peripheral stalks each consisting of EG heterodimers, one central rotor including subunits D and F, and the regulatory subunits C and H. The proton translocation complex V0 consists of the proton transport subunit a, a ring of proteolipid subunits c9c'', rotary subunit d, subunits e and f, and two accessory subunits.

Its function is as follows. Subunit of the V1 complex of vacuolar(H+)-ATPase (V-ATPase), a multisubunit enzyme composed of a peripheral complex (V1) that hydrolyzes ATP and a membrane integral complex (V0) that translocates protons. V-ATPase is responsible for acidifying and maintaining the pH of intracellular compartments and in some cell types, is targeted to the plasma membrane, where it is responsible for acidifying the extracellular environment. Subunit C is necessary for the assembly of the catalytic sector of the enzyme and is likely to have a specific function in its catalytic activity. In Xenopus tropicalis (Western clawed frog), this protein is V-type proton ATPase subunit C 1 (atp6v1c1).